Here is a 158-residue protein sequence, read N- to C-terminus: 18.2 kDa class I heat shock protein (158 aa).

Residues 44-158 form the sHSP domain; it reads ENSAFVSTRV…PEVKTIDISG (115 aa).

Belongs to the small heat shock protein (HSP20) family. In terms of assembly, forms oligomeric structures.

The protein resides in the cytoplasm. This is 18.2 kDa class I heat shock protein (HSP18.2) from Medicago sativa (Alfalfa).